The chain runs to 1453 residues: MCVCACARVCVYVCTRHHPPLDVFPADDVITPPCSSWPLRGVMSRPACQCLRRCEVMGEVNGPVCSPEIVLASAGKTLSENGQENSPHNSDSGHETSSPDSPLTPIEEGAVSPGDDSFFVVWIKFMVLPRKLCINKDVEKLFSAAEKTGNDGEVLCPSDECDTFRIRIIAPGAEPFDLQVNSNEMVQELHQVLLEREATCHRTCFSLQLNGVSLDHFTELKNISGLTDGSVLRVVEQPYTTREARIHVRHIRDLIRSLDMSDAVNGTDGASMSYLASMTLGDRKKNADKTLECSPPDYVLPGYKERPLIPLLPVMKEPVLALKSLAISPFNPPPGHRKLKGDVLYLTFDTREGRRYHITCCTKGFYVNATTEAGFRPTPSPSHRTVHHSLLDLLSSISISFKRAMALILKRRSEKHIFERLPTPYQVNSWIAPVFEQIEDGIRAEDCTQPHKIGLEDHIPGQIRDWNEELQTTHELPRETLGERLIRERAIFKIHSDFVSAAIKVNVSMAVVDGNVVAINPADEPRTHMYIWNNIFFSLGFDVKDHYKDLGGDAAAHAATSNDLQGVRAYAQLDNPKLFTLGMVIVDYKGFRVTAQSIIPGILEREQEQSVIYGSVDFGKTVVSSEEYHDLLSKPAEQLKILPHEVHSGKDDGKIIKLCSSFETKGIVGNDSRHYILDLLRTFPPDVNYLEDAEVTDICKANGYPRTFPHKLASLRQELIDAFVEYRYLMFIRIAAYHVQQTKLGLLETDYNDDKKETTKEDTVLKVTGFSEDAIMSQIKREITADIKIDEMPLLETEAAKKIMEEVIDSDHKKVDSLDKEISETIMAKAAKAVGSIRMDAFDVRFNPDCYCSTVRHAESEDITKQRRLVAEAAEFLIVQQLPNFVRDCLQRTIMLLDGASLIDSLHSRGINIRYLGKLTKYIQNVGQLSYVKVICITELLCRCAKHIFRGYLQPVSSAHTAAAVSHFLNCLLSSSTEPLTPSNEEVSMPINSVKKSRSSKRRKQISSGGKENDDWAQMSSHKLWERVKSDADFYYAFTIDEENIDAYLSTVGIQKTSFLRRFVQIVGIQMLLRDYNLESGKKSQLFVEDDIQSLYCQAKHVDPKAVDAHSLFLSGQTKVQQGQLRAGFDLVLESLNLMNSVYGAMHSDMAQCMRLLARLSYILGDPSEALSQQHKATLMSERCNGLDSANTIIEYLNLAHFSFANLHIAAALKLLYRARYLLLLIHGENHPFMAEIDGNIGVILYAVQEFDDALKFLQNALKLHQIYLEPQALKTALIYHLLARTYSCRGDFRTALQMEKETFTIYSKTFGIDHEKTKESSDCLKHLTQQAVTFQKRINEANRQGSNNIGQLLPVEIHRPSLHSVLEVLNILNGIIFIQLKGISTSSDIGEENYELGNNNNNNNKRKKKAVEDLAVKKNGNNDDTTVISSRPQVNNMSGSSTVQVMQEVALD.

A compositionally biased stretch (polar residues) spans 78 to 101 (LSENGQENSPHNSDSGHETSSPDS). The disordered stretch occupies residues 78–110 (LSENGQENSPHNSDSGHETSSPDSPLTPIEEGA). In terms of domain architecture, Clu spans 439–690 (EDGIRAEDCT…RTFPPDVNYL (252 aa)). Residues 979 to 1015 (PLTPSNEEVSMPINSVKKSRSSKRRKQISSGGKENDD) form a disordered region. A compositionally biased stretch (basic residues) spans 995-1005 (KKSRSSKRRKQ). TPR repeat units follow at residues 1235–1268 (AEID…HQIY) and 1277–1310 (ALIY…YSKT).

Belongs to the CLU family.

The protein localises to the cytoplasm. Functionally, mRNA-binding protein involved in proper cytoplasmic distribution of mitochondria. This chain is Clustered mitochondria protein homolog, found in Brugia malayi (Filarial nematode worm).